The sequence spans 484 residues: ATP synthase subunit beta (484 aa).

Gly156–Thr163 contributes to the ATP binding site.

It belongs to the ATPase alpha/beta chains family. As to quaternary structure, F-type ATPases have 2 components, CF(1) - the catalytic core - and CF(0) - the membrane proton channel. CF(1) has five subunits: alpha(3), beta(3), gamma(1), delta(1), epsilon(1). CF(0) has three main subunits: a(1), b(2) and c(9-12). The alpha and beta chains form an alternating ring which encloses part of the gamma chain. CF(1) is attached to CF(0) by a central stalk formed by the gamma and epsilon chains, while a peripheral stalk is formed by the delta and b chains.

It is found in the cell inner membrane. It catalyses the reaction ATP + H2O + 4 H(+)(in) = ADP + phosphate + 5 H(+)(out). In terms of biological role, produces ATP from ADP in the presence of a proton gradient across the membrane. The catalytic sites are hosted primarily by the beta subunits. The protein is ATP synthase subunit beta of Rhizorhabdus wittichii (strain DSM 6014 / CCUG 31198 / JCM 15750 / NBRC 105917 / EY 4224 / RW1) (Sphingomonas wittichii).